Consider the following 198-residue polypeptide: Guanylate kinase (198 aa).

A Guanylate kinase-like domain is found at 4 to 186 (PRPVVLSGPS…AYATLKQALS (183 aa)). 14–19 (GAGKST) contributes to the ATP binding site. 37 to 51 (SHTTRNPRPGEEDGK) is a substrate binding site. Catalysis depends on residues Arg-44, Arg-137, and Arg-148. ATP is bound at residue 171–172 (ND).

Belongs to the guanylate kinase family. Monomer. Interacts with RD3. Widely expressed. In retina is expressed in inner segment, outer nuclear layer, outer plexiform layer, inner plexiform layer, and ganglion cell layer (at protein level).

The protein localises to the photoreceptor inner segment. Its subcellular location is the cytoplasm. It localises to the cytosol. The protein resides in the mitochondrion. The enzyme catalyses GMP + ATP = GDP + ADP. Functionally, catalyzes the phosphorylation of GMP to GDP. Essential enzyme for recycling GMP and indirectly, cyclic GMP (cGMP). Involved in the cGMP metabolism in photoreceptors. The chain is Guanylate kinase from Mus musculus (Mouse).